Here is a 219-residue protein sequence, read N- to C-terminus: MSTTDNTNGDDRRPGQPEWDDEENNFEHLDATEVPAEEEALVESAGLDADTLADLEDAFDGVDASTEDPGATVGETSTLESELAERTEDLQRLSAEYANYRRRTDRERKVGVEAAKAKVLGELLPILDDLELAQKHGDLDEGPLKAFRDKLVSVVEGLGVSAFGAEGDVFDAERHEAVQDLSSGDDKVLGTVLRRGYQMNDRLLRTAMVIIADPAEDAQ.

2 disordered regions span residues 1 to 32 (MSTT…LDAT) and 59 to 87 (FDGV…AERT).

This sequence belongs to the GrpE family. As to quaternary structure, homodimer.

The protein localises to the cytoplasm. Participates actively in the response to hyperosmotic and heat shock by preventing the aggregation of stress-denatured proteins, in association with DnaK and GrpE. It is the nucleotide exchange factor for DnaK and may function as a thermosensor. Unfolded proteins bind initially to DnaJ; upon interaction with the DnaJ-bound protein, DnaK hydrolyzes its bound ATP, resulting in the formation of a stable complex. GrpE releases ADP from DnaK; ATP binding to DnaK triggers the release of the substrate protein, thus completing the reaction cycle. Several rounds of ATP-dependent interactions between DnaJ, DnaK and GrpE are required for fully efficient folding. This chain is Protein GrpE, found in Corynebacterium diphtheriae (strain ATCC 700971 / NCTC 13129 / Biotype gravis).